A 236-amino-acid polypeptide reads, in one-letter code: Uridylate kinase (236 aa).

12–15 is a binding site for ATP; it reads KISG. Residues 20–25 form an involved in allosteric activation by GTP region; the sequence is GTNGYG. Gly54 contacts UMP. ATP contacts are provided by Gly55 and Arg59. Residues Asp72 and 133 to 140 each bind UMP; that span reads TGNPYFST. The ATP site is built by Tyr166 and Asp169.

This sequence belongs to the UMP kinase family. In terms of assembly, homohexamer.

The protein resides in the cytoplasm. The catalysed reaction is UMP + ATP = UDP + ADP. Its pathway is pyrimidine metabolism; CTP biosynthesis via de novo pathway; UDP from UMP (UMPK route): step 1/1. Allosterically activated by GTP. Inhibited by UTP. Functionally, catalyzes the reversible phosphorylation of UMP to UDP. The polypeptide is Uridylate kinase (Clostridium acetobutylicum (strain ATCC 824 / DSM 792 / JCM 1419 / IAM 19013 / LMG 5710 / NBRC 13948 / NRRL B-527 / VKM B-1787 / 2291 / W)).